Here is a 102-residue protein sequence, read N- to C-terminus: Integration host factor subunit alpha (102 aa).

The protein belongs to the bacterial histone-like protein family. Heterodimer of an alpha and a beta chain.

Functionally, this protein is one of the two subunits of integration host factor, a specific DNA-binding protein that functions in genetic recombination as well as in transcriptional and translational control. This is Integration host factor subunit alpha from Chromohalobacter salexigens (strain ATCC BAA-138 / DSM 3043 / CIP 106854 / NCIMB 13768 / 1H11).